Here is a 385-residue protein sequence, read N- to C-terminus: Photoreceptor ankyrin repeat protein (385 aa).

ANK repeat units follow at residues 17–46, 53–83, 87–116, 122–151, and 156–190; these read CNLK…SPEE, NGRT…DVNQ, DGNT…GLDL, RGLT…DLSS, and RGKT…QLSL. Residues 270–385 form a disordered region; the sequence is LGTRGKSVPE…GGLGQAGGSK (116 aa). Pro residues predominate over residues 284 to 297; the sequence is APPPPPEPHPPQQV. Residues 304–326 show a composition bias toward polar residues; sequence APNQSPQSMFSQWLQSRDSTRSQ. The span at 361 to 373 shows a compositional bias: basic and acidic residues; that stretch reads FQERKKKEEETEP. Gly residues predominate over residues 374 to 385; the sequence is RGGGLGQAGGSK.

As to expression, isoform 1: Expressed predominantly in the retina. Isoform 2: Expressed in the pineal gland.

It is found in the cytoplasm. The protein resides in the cytosol. It localises to the nucleus. Its function is as follows. Acts as a transcriptional repressor for CRX-activated photoreceptor gene regulation. In Mus musculus (Mouse), this protein is Photoreceptor ankyrin repeat protein.